A 729-amino-acid chain; its full sequence is Fatty acid oxidation complex subunit alpha (729 aa).

An enoyl-CoA hydratase/isomerase region spans residues 1 to 189; it reads MLYQGESLYL…KVGLVQAVVA (189 aa). Aspartate 296 contributes to the substrate binding site. The 3-hydroxyacyl-CoA dehydrogenase stretch occupies residues 311-729; it reads PVPQQAAVLG…HADVSHGQPA (419 aa). NAD(+) is bound by residues methionine 324, aspartate 343, 400–402, lysine 407, and serine 429; that span reads VVE. Histidine 450 acts as the For 3-hydroxyacyl-CoA dehydrogenase activity in catalysis. An NAD(+)-binding site is contributed by asparagine 453. 2 residues coordinate substrate: asparagine 500 and tyrosine 660.

This sequence in the N-terminal section; belongs to the enoyl-CoA hydratase/isomerase family. In the C-terminal section; belongs to the 3-hydroxyacyl-CoA dehydrogenase family. As to quaternary structure, heterotetramer of two alpha chains (FadB) and two beta chains (FadA).

It catalyses the reaction a (3S)-3-hydroxyacyl-CoA + NAD(+) = a 3-oxoacyl-CoA + NADH + H(+). It carries out the reaction a (3S)-3-hydroxyacyl-CoA = a (2E)-enoyl-CoA + H2O. The catalysed reaction is a 4-saturated-(3S)-3-hydroxyacyl-CoA = a (3E)-enoyl-CoA + H2O. The enzyme catalyses (3S)-3-hydroxybutanoyl-CoA = (3R)-3-hydroxybutanoyl-CoA. It catalyses the reaction a (3Z)-enoyl-CoA = a 4-saturated (2E)-enoyl-CoA. It carries out the reaction a (3E)-enoyl-CoA = a 4-saturated (2E)-enoyl-CoA. It participates in lipid metabolism; fatty acid beta-oxidation. In terms of biological role, involved in the aerobic and anaerobic degradation of long-chain fatty acids via beta-oxidation cycle. Catalyzes the formation of 3-oxoacyl-CoA from enoyl-CoA via L-3-hydroxyacyl-CoA. It can also use D-3-hydroxyacyl-CoA and cis-3-enoyl-CoA as substrate. This chain is Fatty acid oxidation complex subunit alpha, found in Pectobacterium atrosepticum (strain SCRI 1043 / ATCC BAA-672) (Erwinia carotovora subsp. atroseptica).